A 1004-amino-acid chain; its full sequence is Polyhomeotic-like protein 1 (1004 aa).

Positions 1–22 are enriched in low complexity; that stretch reads METESEQNSNSTNGSSSSGGSS. Disordered regions lie at residues 1–24, 212–241, 261–355, 432–512, 556–589, and 636–672; these read METE…SSRP, NQQA…SSLS, SLNL…NLTR, QQQQ…QLGA, RGMP…PPTL, and TLAV…SPKV. Residues 212–228 are compositionally biased toward polar residues; the sequence is NQQASAQGPQMQGSTQK. Over residues 279 to 303 the composition is skewed to gly residues; the sequence is MGPGGGGQAHGGLGQLPSSGMGGGS. Polar residues-rich tracts occupy residues 319 to 329 and 344 to 355; these read QTVTVSQGSQT and SGQQNVGMNLTR. A compositionally biased stretch (low complexity) spans 432 to 447; it reads QQQQQQQQPQATTLTA. Residues 448–458 show a composition bias toward pro residues; sequence PQPPQVPPTQQ. Low complexity predominate over residues 459 to 482; sequence VPPSQSQQQAQTLVVQPMLQSSPL. A compositionally biased stretch (pro residues) spans 483–495; sequence SLPPDAAPKPPIP. Residues 566 to 583 are compositionally biased toward low complexity; it reads QAHLASSPPSSQAPGALQ. A Phosphoserine modification is found at serine 645. Lysine 763 participates in a covalent cross-link: Glycyl lysine isopeptide (Lys-Gly) (interchain with G-Cter in SUMO2). Residues 791–825 form an FCS-type zinc finger; it reads LDKKANLLKCEYCGKYAPAEQFRGSKRFCSMTCAK. Positions 800, 803, 819, and 823 each coordinate Zn(2+). The segment at 848-928 is disordered; it reads ANYARVRRRG…APPTPELHGI (81 aa). Residue serine 898 is modified to Phosphoserine. Threonine 922 is modified (phosphothreonine). The SAM domain occupies 940-1004; that stretch reads WSVEEVYEFI…CAKINVLKET (65 aa).

In terms of assembly, homodimer. Component of a PRC1-like complex. Interacts with RNF2 and CBX7. Interacts with PHC2, PHC2 and BMI1.

It is found in the nucleus. Functionally, component of a Polycomb group (PcG) multiprotein PRC1-like complex, a complex class required to maintain the transcriptionally repressive state of many genes, including Hox genes, throughout development. PcG PRC1 complex acts via chromatin remodeling and modification of histones; it mediates monoubiquitination of histone H2A 'Lys-119', rendering chromatin heritably changed in its expressibility. Required for proper control of cellular levels of GMNN expression. The chain is Polyhomeotic-like protein 1 (PHC1) from Homo sapiens (Human).